Here is a 167-residue protein sequence, read N- to C-terminus: uncharacterized protein (167 aa).

This is an uncharacterized protein from Mycobacterium tuberculosis (strain CDC 1551 / Oshkosh).